Here is a 307-residue protein sequence, read N- to C-terminus: MDKRWSLKGMTALVTGGASGIGYAIVEELAGFGARIHVCDISEAKLNQSLSEWEKKGFQVSGSVCDVASRPEREELMQTVSSQFDGKLNILVSNVGVIRSKPTTEYTEDDFAFHISSNVEAAYHFSQLSHPLLKASGYGSIIFVSSIAGVISFDAGSIYGLTKGALIQLAKNLACEWAKDGIRANAVAPNVINTPLSQSYLEDVSFKKALLSRTPLGRVGEPNEVASLVAFLCLPAASYITGQTICVDGGLTVNGFSYQPEEALLSRTSLRRVGEPNEVSSLVVFLCLPAASYITGQMVKPFVLMEV.

13-37 (LVTGGASGIGYAIVEELAGFGARIH) contacts NADP(+). S146 lines the substrate pocket. Y159 serves as the catalytic Proton acceptor.

The protein belongs to the short-chain dehydrogenases/reductases (SDR) family. SDR65C subfamily.

The chain is Tropinone reductase homolog At2g29340 from Arabidopsis thaliana (Mouse-ear cress).